We begin with the raw amino-acid sequence, 453 residues long: Secreted aspartic protease 10 (453 aa).

Residues 1–20 form the signal peptide; that stretch reads MDLVIMNFVFLLYLTSVVKC. Residues 52–372 enclose the Peptidase A1 domain; that stretch reads YTTELEIGSN…DLQDMTISVA (321 aa). Residue aspartate 70 is part of the active site. 70-72 is a pepstatin A binding site; it reads DTG. Residues cysteine 85 and cysteine 112 are joined by a disulfide bond. Asparagine 115 and asparagine 128 each carry an N-linked (GlcNAc...) asparagine glycan. 138 to 139 lines the pepstatin A pocket; that stretch reads VD. N-linked (GlcNAc...) asparagine glycans are attached at residues asparagine 168, asparagine 208, asparagine 211, and asparagine 245. Residue aspartate 266 is part of the active site. 266 to 270 lines the pepstatin A pocket; it reads DTGST. A glycan (N-linked (GlcNAc...) asparagine) is linked at asparagine 287. A disulfide bridge links cysteine 301 with cysteine 333. The tract at residues 387 to 432 is disordered; the sequence is NPNEDQNEVPTSTSFTQSASSSGSQPSSTISGENMDKNTTSSSSGN. Over residues 397–417 the composition is skewed to low complexity; it reads TSTSFTQSASSSGSQPSSTIS. Positions 423-432 are enriched in polar residues; sequence KNTTSSSSGN. A glycan (N-linked (GlcNAc...) asparagine) is linked at asparagine 424. Serine 429 is lipidated: GPI-anchor amidated serine. The propeptide at 430–453 is removed in mature form; that stretch reads SGNCQTRSWIAILSALFLVYIHII.

This sequence belongs to the peptidase A1 family. Post-translationally, the GPI-anchor is attached to the protein in the endoplasmic reticulum and serves to target the protein to the cell surface. There, the glucosamine-inositol phospholipid moiety is cleaved off and the GPI-modified mannoprotein is covalently attached via its lipidless GPI glycan remnant to the 1,6-beta-glucan of the outer cell wall layer.

It is found in the secreted. Its subcellular location is the cell membrane. It catalyses the reaction Preferential cleavage at the carboxyl of hydrophobic amino acids, but fails to cleave 15-Leu-|-Tyr-16, 16-Tyr-|-Leu-17 and 24-Phe-|-Phe-25 of insulin B chain. Activates trypsinogen, and degrades keratin.. In terms of biological role, secreted aspartic peptidases (SAPs) are a group of ten acidic hydrolases considered as key virulence factors. These enzymes supply the fungus with nutrient amino acids as well as are able to degrade the selected host's proteins involved in the immune defense. Required for cell surface integrity and cell separation during budding. The polypeptide is Secreted aspartic protease 10 (Candida albicans (strain SC5314 / ATCC MYA-2876) (Yeast)).